Reading from the N-terminus, the 255-residue chain is Gene 54 protein (255 aa).

This Mycobacterium phage D29 (Mycobacteriophage D29) protein is Gene 54 protein (54).